The sequence spans 116 residues: Large ribosomal subunit protein uL18 (116 aa).

The protein belongs to the universal ribosomal protein uL18 family. Part of the 50S ribosomal subunit; part of the 5S rRNA/L5/L18/L25 subcomplex. Contacts the 5S and 23S rRNAs.

Functionally, this is one of the proteins that bind and probably mediate the attachment of the 5S RNA into the large ribosomal subunit, where it forms part of the central protuberance. The protein is Large ribosomal subunit protein uL18 of Azotobacter vinelandii (strain DJ / ATCC BAA-1303).